The chain runs to 177 residues: MSEVTTIARPYAKAAFDFAVEQKAVDSWLSMLLFAAEVSKDDTVQQVIHSSMAPEQLAQLFNQICGEQLNEQGQNLIRVMAENGRLSVLPAVVAEFSALKAELDKELEAQITSAAALSEAEKVKIQKSLEARYQRTVRLNCQLDPSLMAGLVIKIGDDIIDASVRSKLNRLAEALQS.

Belongs to the ATPase delta chain family. F-type ATPases have 2 components, F(1) - the catalytic core - and F(0) - the membrane proton channel. F(1) has five subunits: alpha(3), beta(3), gamma(1), delta(1), epsilon(1). F(0) has three main subunits: a(1), b(2) and c(10-14). The alpha and beta chains form an alternating ring which encloses part of the gamma chain. F(1) is attached to F(0) by a central stalk formed by the gamma and epsilon chains, while a peripheral stalk is formed by the delta and b chains.

It localises to the cell inner membrane. Functionally, f(1)F(0) ATP synthase produces ATP from ADP in the presence of a proton or sodium gradient. F-type ATPases consist of two structural domains, F(1) containing the extramembraneous catalytic core and F(0) containing the membrane proton channel, linked together by a central stalk and a peripheral stalk. During catalysis, ATP synthesis in the catalytic domain of F(1) is coupled via a rotary mechanism of the central stalk subunits to proton translocation. In terms of biological role, this protein is part of the stalk that links CF(0) to CF(1). It either transmits conformational changes from CF(0) to CF(1) or is implicated in proton conduction. This Tolumonas auensis (strain DSM 9187 / NBRC 110442 / TA 4) protein is ATP synthase subunit delta.